Here is a 689-residue protein sequence, read N- to C-terminus: Glycine--tRNA ligase beta subunit (689 aa).

The protein belongs to the class-II aminoacyl-tRNA synthetase family. As to quaternary structure, tetramer of two alpha and two beta subunits.

The protein resides in the cytoplasm. It carries out the reaction tRNA(Gly) + glycine + ATP = glycyl-tRNA(Gly) + AMP + diphosphate. The sequence is that of Glycine--tRNA ligase beta subunit from Shigella dysenteriae serotype 1 (strain Sd197).